The chain runs to 198 residues: uncharacterized protein (198 aa).

The segment at 1–23 is disordered; that stretch reads MYFGKTRQSDQSGRVPPNQNVTT. A compositionally biased stretch (polar residues) spans 9–23; it reads SDQSGRVPPNQNVTT. Mo-molybdopterin is bound by residues C75, H144, and R149.

Requires Mo-molybdopterin as cofactor.

This is an uncharacterized protein from Bacillus subtilis (strain 168).